The sequence spans 163 residues: Endoribonuclease YbeY (163 aa).

Residues H123, H127, and H133 each coordinate Zn(2+).

This sequence belongs to the endoribonuclease YbeY family. Zn(2+) serves as cofactor.

Its subcellular location is the cytoplasm. In terms of biological role, single strand-specific metallo-endoribonuclease involved in late-stage 70S ribosome quality control and in maturation of the 3' terminus of the 16S rRNA. This Helicobacter hepaticus (strain ATCC 51449 / 3B1) protein is Endoribonuclease YbeY.